We begin with the raw amino-acid sequence, 390 residues long: Coiled-coil domain-containing protein 85C (390 aa).

Coiled-coil stretches lie at residues 26 to 86 and 116 to 146; these read KEEL…RELC and KEVGTYQQKLKELEAKQESLVRDNLELKEII. Residues 153–237 are disordered; the sequence is RNGPGSRSSI…RSIPNGLNDS (85 aa). Residues 157–172 show a composition bias toward polar residues; the sequence is GSRSSIDSQNSLTNLN. Low complexity predominate over residues 182 to 194; it reads DGSSTSSTGSAGS.

It belongs to the CCDC85 family.

Its subcellular location is the cell junction. It localises to the tight junction. The protein resides in the adherens junction. May play a role in cell-cell adhesion and epithelium development. May play an important role in cortical development, especially in the maintenance of radial glia. This Xenopus laevis (African clawed frog) protein is Coiled-coil domain-containing protein 85C (ccdc85c).